We begin with the raw amino-acid sequence, 375 residues long: Beta sliding clamp (375 aa).

The protein belongs to the beta sliding clamp family. In terms of assembly, forms a ring-shaped head-to-tail homodimer around DNA which binds and tethers DNA polymerases and other proteins to the DNA. The DNA replisome complex has a single clamp-loading complex (3 tau and 1 each of delta, delta', psi and chi subunits) which binds 3 Pol III cores (1 core on the leading strand and 2 on the lagging strand) each with a beta sliding clamp dimer. Additional proteins in the replisome are other copies of gamma, psi and chi, Ssb, DNA helicase and RNA primase.

The protein resides in the cytoplasm. In terms of biological role, confers DNA tethering and processivity to DNA polymerases and other proteins. Acts as a clamp, forming a ring around DNA (a reaction catalyzed by the clamp-loading complex) which diffuses in an ATP-independent manner freely and bidirectionally along dsDNA. Initially characterized for its ability to contact the catalytic subunit of DNA polymerase III (Pol III), a complex, multichain enzyme responsible for most of the replicative synthesis in bacteria; Pol III exhibits 3'-5' exonuclease proofreading activity. The beta chain is required for initiation of replication as well as for processivity of DNA replication. The polypeptide is Beta sliding clamp (dnaN) (Synechococcus elongatus (strain ATCC 33912 / PCC 7942 / FACHB-805) (Anacystis nidulans R2)).